Reading from the N-terminus, the 402-residue chain is DNA primase DnaG (402 aa).

One can recognise a Toprim domain in the interval 165 to 243 (PNLIIVEGRA…KIDFVARAPV (79 aa)). Positions 171, 216, and 218 each coordinate Mg(2+).

It belongs to the archaeal DnaG primase family. As to quaternary structure, forms a ternary complex with MCM helicase and DNA. Component of the archaeal exosome complex. Requires Mg(2+) as cofactor.

It catalyses the reaction ssDNA + n NTP = ssDNA/pppN(pN)n-1 hybrid + (n-1) diphosphate.. Its function is as follows. RNA polymerase that catalyzes the synthesis of short RNA molecules used as primers for DNA polymerase during DNA replication. Also part of the exosome, which is a complex involved in RNA degradation. Acts as a poly(A)-binding protein that enhances the interaction between heteromeric, adenine-rich transcripts and the exosome. The protein is DNA primase DnaG of Saccharolobus islandicus (strain Y.N.15.51 / Yellowstone #2) (Sulfolobus islandicus).